Reading from the N-terminus, the 141-residue chain is Large ribosomal subunit protein uL11 (141 aa).

Belongs to the universal ribosomal protein uL11 family. Part of the ribosomal stalk of the 50S ribosomal subunit. Interacts with L10 and the large rRNA to form the base of the stalk. L10 forms an elongated spine to which L12 dimers bind in a sequential fashion forming a multimeric L10(L12)X complex. Post-translationally, one or more lysine residues are methylated.

Forms part of the ribosomal stalk which helps the ribosome interact with GTP-bound translation factors. The polypeptide is Large ribosomal subunit protein uL11 (Chlamydia trachomatis serovar A (strain ATCC VR-571B / DSM 19440 / HAR-13)).